Here is a 91-residue protein sequence, read N- to C-terminus: Small ribosomal subunit protein bS20 (91 aa).

The protein belongs to the bacterial ribosomal protein bS20 family.

Functionally, binds directly to 16S ribosomal RNA. This is Small ribosomal subunit protein bS20 from Acidithiobacillus ferrooxidans (strain ATCC 23270 / DSM 14882 / CIP 104768 / NCIMB 8455) (Ferrobacillus ferrooxidans (strain ATCC 23270)).